A 194-amino-acid chain; its full sequence is Putative manganese efflux pump MntP (194 aa).

6 helical membrane-spanning segments follow: residues 2–22 (TPGA…AAAV), 40–60 (FVFG…GLVA), 67–87 (VDHW…IWEA), 107–129 (ALIA…LAFI), 133–155 (IWVI…MLIG), and 168–188 (LIGG…HTGV).

Belongs to the MntP (TC 9.B.29) family.

It is found in the cell inner membrane. Its function is as follows. Probably functions as a manganese efflux pump. This is Putative manganese efflux pump MntP from Rhodopseudomonas palustris (strain BisA53).